We begin with the raw amino-acid sequence, 305 residues long: Secreted mono- and diacylglycerol lipase A (305 aa).

The first 26 residues, methionine 1 to arginine 26, serve as a signal peptide directing secretion. 2 cysteine pairs are disulfide-bonded: cysteine 62-cysteine 67 and cysteine 129-cysteine 132. Catalysis depends on serine 171, which acts as the Nucleophile. Aspartate 225 (charge relay system) is an active-site residue. N-linked (GlcNAc...) asparagine glycosylation occurs at asparagine 251. Histidine 285 (charge relay system) is an active-site residue. Positions lysine 303–valine 305 are cleaved as a propeptide — removed in mature form.

The protein belongs to the AB hydrolase superfamily. Lipase family. Class 3 subfamily. Post-translationally, multiple forms of this lipase are due to the presence of different carbohydrates, which may contribute to the stability of this lipase but not to the enzyme activity.

Its subcellular location is the secreted. The catalysed reaction is a monoacylglycerol + H2O = glycerol + a fatty acid + H(+). It carries out the reaction a diacylglycerol + H2O = a monoacylglycerol + a fatty acid + H(+). Its activity is regulated as follows. Both Fe(3+) and Hg(2+) inhibit the activity significantly. Its function is as follows. Secreted lipase strictly specific to mono- and diacylglycerol, but not triacylglycerol. Hydrolyzes long-chain monoacylglycerols most efficiently with the highest activities observed on 1- and 3- monopalmitoyl-sn-glycerol or 1-monostearoyl-rac-glycerol. Prefers to attack alpha positions to beta positions of monoacylglycerol, but shows no stereospecificity on mono- and diacylglycerol. This chain is Secreted mono- and diacylglycerol lipase A, found in Penicillium camembertii.